Reading from the N-terminus, the 45-residue chain is Movement protein p5 (45 aa).

Residues 8–28 (ILLLVVDFVFVIILLLVLTFV) form a helical membrane-spanning segment.

It is found in the host rough endoplasmic reticulum membrane. Transports viral genome to neighboring plant cells directly through plasmosdesmata, without any budding. The movement protein allows efficient cell to cell propagation, by bypassing the host cell wall barrier. Two movement proteins, p6, Hsp70h and three structural proteins, CP, CPm, and P64 are essential for cell-cell movement. Also plays a role in virion formation. Together with CPm and p64, encapsidates the 5'-terminal portion of the viral genome. In Grapevine leafroll-associated virus 3 (isolate United States/NY1) (GLRaV-3), this protein is Movement protein p5.